Here is an 874-residue protein sequence, read N- to C-terminus: Valine--tRNA ligase (874 aa).

The 'HIGH' region signature appears at 42-52 (PNITGRIHIGH). The 'KMSKS' region signature appears at 522-526 (KMSKS). K525 is a binding site for ATP. Positions 806-874 (DYIDIDTEKQ…KLQALLKEIS (69 aa)) form a coiled coil.

It belongs to the class-I aminoacyl-tRNA synthetase family. ValS type 1 subfamily. Monomer.

Its subcellular location is the cytoplasm. The catalysed reaction is tRNA(Val) + L-valine + ATP = L-valyl-tRNA(Val) + AMP + diphosphate. In terms of biological role, catalyzes the attachment of valine to tRNA(Val). As ValRS can inadvertently accommodate and process structurally similar amino acids such as threonine, to avoid such errors, it has a 'posttransfer' editing activity that hydrolyzes mischarged Thr-tRNA(Val) in a tRNA-dependent manner. In Petrotoga mobilis (strain DSM 10674 / SJ95), this protein is Valine--tRNA ligase.